A 351-amino-acid polypeptide reads, in one-letter code: DNA-directed RNA polymerase subunit alpha (351 aa).

Residues 1-245 (MPRRNLLKGF…EHFTVFVNFD (245 aa)) are alpha N-terminal domain (alpha-NTD). Residues 261 to 351 (AVLELLNTKI…MRQKEEIDEA (91 aa)) form an alpha C-terminal domain (alpha-CTD) region.

It belongs to the RNA polymerase alpha chain family. As to quaternary structure, homodimer. The RNAP catalytic core consists of 2 alpha, 1 beta, 1 beta' and 1 omega subunit. When a sigma factor is associated with the core the holoenzyme is formed, which can initiate transcription.

It catalyses the reaction RNA(n) + a ribonucleoside 5'-triphosphate = RNA(n+1) + diphosphate. Functionally, DNA-dependent RNA polymerase catalyzes the transcription of DNA into RNA using the four ribonucleoside triphosphates as substrates. This is DNA-directed RNA polymerase subunit alpha from Treponema pallidum (strain Nichols).